The primary structure comprises 651 residues: UvrABC system protein C (651 aa).

Residues 20–97 enclose the GIY-YIG domain; the sequence is ERCGVYRMFD…IKKFQPKFNI (78 aa). The UVR domain occupies 207–242; it reads KALQENLSKKMEELSSQMRFEEAAEIRDRIKALSYV.

The protein belongs to the UvrC family. Interacts with UvrB in an incision complex.

Its subcellular location is the cytoplasm. The UvrABC repair system catalyzes the recognition and processing of DNA lesions. UvrC both incises the 5' and 3' sides of the lesion. The N-terminal half is responsible for the 3' incision and the C-terminal half is responsible for the 5' incision. The polypeptide is UvrABC system protein C (Rickettsia akari (strain Hartford)).